A 620-amino-acid chain; its full sequence is Phosphopentomutase (620 aa).

Residues arginine 71 and serine 173 each contribute to the alpha-D-glucose 1,6-bisphosphate site. Residue serine 173 is the Phosphoserine intermediate of the active site. Mg(2+)-binding residues include serine 173, aspartate 330, aspartate 332, and aspartate 334. Serine 173 is modified (phosphoserine). Alpha-D-glucose 1,6-bisphosphate contacts are provided by aspartate 334, arginine 335, threonine 408, glutamate 432, and lysine 446.

It belongs to the phosphohexose mutase family. In terms of assembly, monomer. It depends on Mg(2+) as a cofactor. As to expression, highly expressed in lung, spleen and thymus. Expressed at lower levels in liver, brain, kidney, skeletal muscle, testis and heart.

The protein localises to the cytoplasm. It localises to the cytosol. It carries out the reaction alpha-D-ribose 1-phosphate = D-ribose 5-phosphate. The catalysed reaction is 2-deoxy-alpha-D-ribose 1-phosphate = 2-deoxy-D-ribose 5-phosphate. The enzyme catalyses alpha-D-glucose 1-phosphate = alpha-D-glucose 6-phosphate. It catalyses the reaction O-phospho-L-seryl-[protein] + alpha-D-glucose 1-phosphate = alpha-D-glucose 1,6-bisphosphate + L-seryl-[protein]. It carries out the reaction alpha-D-glucose 1,6-bisphosphate + L-seryl-[protein] = O-phospho-L-seryl-[protein] + alpha-D-glucose 6-phosphate. Its function is as follows. Catalyzes the conversion of the nucleoside breakdown products ribose-1-phosphate and deoxyribose-1-phosphate to the corresponding 5-phosphopentoses. Catalyzes the reversible isomerization of alpha-D-glucose 1-phosphate to alpha-D-glucose 6-phosphate but with a lower catalytic efficiency. The mechanism proceeds via the intermediate compound alpha-D-glucose 1,6-bisphosphate. In vitro, also has a low glucose 1,6-bisphosphate synthase activity which is most probably not physiologically relevant. The chain is Phosphopentomutase from Mus musculus (Mouse).